A 311-amino-acid chain; its full sequence is Methionyl-tRNA formyltransferase (311 aa).

110 to 113 (SLLP) provides a ligand contact to (6S)-5,6,7,8-tetrahydrofolate.

Belongs to the Fmt family.

The enzyme catalyses L-methionyl-tRNA(fMet) + (6R)-10-formyltetrahydrofolate = N-formyl-L-methionyl-tRNA(fMet) + (6S)-5,6,7,8-tetrahydrofolate + H(+). Functionally, attaches a formyl group to the free amino group of methionyl-tRNA(fMet). The formyl group appears to play a dual role in the initiator identity of N-formylmethionyl-tRNA by promoting its recognition by IF2 and preventing the misappropriation of this tRNA by the elongation apparatus. The chain is Methionyl-tRNA formyltransferase from Streptococcus thermophilus (strain ATCC BAA-250 / LMG 18311).